A 145-amino-acid chain; its full sequence is Transcriptional regulator SlyA (145 aa).

Positions 2–135 constitute an HTH marR-type domain; it reads ELPLGSDLAR…LALLVARLEK (134 aa). The segment at residues 49–72 is a DNA-binding region (H-T-H motif); sequence QIQLAKAIGIEQPSLVRTLDQLEE.

The protein belongs to the SlyA family. In terms of assembly, homodimer.

Transcription regulator that can specifically activate or repress expression of target genes. This is Transcriptional regulator SlyA from Pectobacterium atrosepticum (strain SCRI 1043 / ATCC BAA-672) (Erwinia carotovora subsp. atroseptica).